The following is a 540-amino-acid chain: GMP synthase [glutamine-hydrolyzing] (540 aa).

One can recognise a Glutamine amidotransferase type-1 domain in the interval 24 to 217 (KILIVDFGSQ…VRKVAGLTGD (194 aa)). Catalysis depends on Cys101, which acts as the Nucleophile. Residues His191 and Glu193 contribute to the active site. The 198-residue stretch at 218–415 (WTMRAFREEA…LGLPEIFVGR (198 aa)) folds into the GMPS ATP-PPase domain. ATP is bound at residue 245–251 (SGGVDSS).

As to quaternary structure, homodimer.

The enzyme catalyses XMP + L-glutamine + ATP + H2O = GMP + L-glutamate + AMP + diphosphate + 2 H(+). It participates in purine metabolism; GMP biosynthesis; GMP from XMP (L-Gln route): step 1/1. In terms of biological role, catalyzes the synthesis of GMP from XMP. In Nitrobacter hamburgensis (strain DSM 10229 / NCIMB 13809 / X14), this protein is GMP synthase [glutamine-hydrolyzing].